The primary structure comprises 90 residues: Elongation factor 1-beta (90 aa).

It belongs to the EF-1-beta/EF-1-delta family.

Promotes the exchange of GDP for GTP in EF-1-alpha/GDP, thus allowing the regeneration of EF-1-alpha/GTP that could then be used to form the ternary complex EF-1-alpha/GTP/AAtRNA. In Sulfolobus acidocaldarius (strain ATCC 33909 / DSM 639 / JCM 8929 / NBRC 15157 / NCIMB 11770), this protein is Elongation factor 1-beta.